We begin with the raw amino-acid sequence, 416 residues long: CinA-like protein (416 aa).

Belongs to the CinA family.

In Thermosynechococcus vestitus (strain NIES-2133 / IAM M-273 / BP-1), this protein is CinA-like protein.